The chain runs to 974 residues: Villin-4 (974 aa).

Gelsolin-like repeat units lie at residues 29–79, 150–190, 262–305, 394–451, 532–572, and 634–675; these read FIPT…DEAG, VHVK…QERA, GQAN…DDRK, LQVW…EERG, MQAI…TDQE, and LKVT…KNKL. A disordered region spans residues 738–783; the sequence is VKNGGTPVADKPKRRTPASYGGRASVPDKSQQRSRSMSFSPDRVRV. 2 positions are modified to phosphoserine: Ser777 and Ser787. 2 disordered regions span residues 801–833 and 845–930; these read NARNLSTPPPVVRKLYPRSVTPDSSKFAPAPKS and KIPP…PVSD. Residues 824–833 are compositionally biased toward low complexity; the sequence is SSKFAPAPKS. Residues 872-887 show a composition bias toward basic and acidic residues; sequence NSKEQEEKKENDKEEG. Residues 888–898 are compositionally biased toward polar residues; sequence SMSSRIESLTI. Phosphoserine is present on Ser890. The HP domain maps to 909–974; it reads EEDLPAHPYD…NKFKMAVQLF (66 aa). Positions 912-921 are enriched in basic and acidic residues; sequence LPAHPYDRLK.

It belongs to the villin/gelsolin family. Preferentially expressed in vegetative tissues. Detected in the whole seedling, hypocotyl, cotyledon, primary root, roots hair cells and trichomes. Expressed in flowers but not in the silique.

It localises to the cytoplasm. Its subcellular location is the cytoskeleton. In terms of biological role, binds actin and actin filament bundles in a Ca(2+)-insensitive manner, but caps the barbed end of actin filaments and is able to sever them in a calcium-dependent manner. Involved in root hair growth through regulating actin organization in a Ca(2+)-dependent manner. This Arabidopsis thaliana (Mouse-ear cress) protein is Villin-4.